Reading from the N-terminus, the 210-residue chain is Probable GTP-binding protein EngB (210 aa).

The EngB-type G domain occupies 30 to 204; it reads QGYEVAFAGR…YRVLADWMEL (175 aa). Residues 38-45, 64-68, 82-85, 149-152, and 182-185 each bind GTP; these read GRSNAGKS, GRTQL, DLPG, TKAD, and LFSA. Mg(2+) is bound by residues S45 and T66.

The protein belongs to the TRAFAC class TrmE-Era-EngA-EngB-Septin-like GTPase superfamily. EngB GTPase family. Mg(2+) is required as a cofactor.

In terms of biological role, necessary for normal cell division and for the maintenance of normal septation. The chain is Probable GTP-binding protein EngB from Pseudomonas putida (strain ATCC 47054 / DSM 6125 / CFBP 8728 / NCIMB 11950 / KT2440).